Consider the following 307-residue polypeptide: Acetyl-coenzyme A carboxylase carboxyl transferase subunit beta (307 aa).

Positions 25 to 294 (VWTKCTSCEQ…PLVVPIEQPK (270 aa)) constitute a CoA carboxyltransferase N-terminal domain. Zn(2+)-binding residues include C29, C32, C48, and C51. The segment at 29 to 51 (CTSCEQVLYHADLERNLEVCPKC) adopts a C4-type zinc-finger fold.

Belongs to the AccD/PCCB family. As to quaternary structure, acetyl-CoA carboxylase is a heterohexamer composed of biotin carboxyl carrier protein (AccB), biotin carboxylase (AccC) and two subunits each of ACCase subunit alpha (AccA) and ACCase subunit beta (AccD). The cofactor is Zn(2+).

Its subcellular location is the cytoplasm. It carries out the reaction N(6)-carboxybiotinyl-L-lysyl-[protein] + acetyl-CoA = N(6)-biotinyl-L-lysyl-[protein] + malonyl-CoA. It participates in lipid metabolism; malonyl-CoA biosynthesis; malonyl-CoA from acetyl-CoA: step 1/1. In terms of biological role, component of the acetyl coenzyme A carboxylase (ACC) complex. Biotin carboxylase (BC) catalyzes the carboxylation of biotin on its carrier protein (BCCP) and then the CO(2) group is transferred by the transcarboxylase to acetyl-CoA to form malonyl-CoA. The sequence is that of Acetyl-coenzyme A carboxylase carboxyl transferase subunit beta from Photobacterium profundum (strain SS9).